The sequence spans 502 residues: Probable cytosol aminopeptidase (502 aa).

Positions 269 and 274 each coordinate Mn(2+). Lys281 is a catalytic residue. Residues Asp292, Asp351, and Glu353 each contribute to the Mn(2+) site. The active site involves Arg355.

The protein belongs to the peptidase M17 family. Mn(2+) serves as cofactor.

It is found in the cytoplasm. It carries out the reaction Release of an N-terminal amino acid, Xaa-|-Yaa-, in which Xaa is preferably Leu, but may be other amino acids including Pro although not Arg or Lys, and Yaa may be Pro. Amino acid amides and methyl esters are also readily hydrolyzed, but rates on arylamides are exceedingly low.. It catalyses the reaction Release of an N-terminal amino acid, preferentially leucine, but not glutamic or aspartic acids.. In terms of biological role, presumably involved in the processing and regular turnover of intracellular proteins. Catalyzes the removal of unsubstituted N-terminal amino acids from various peptides. The protein is Probable cytosol aminopeptidase of Vibrio vulnificus (strain CMCP6).